A 394-amino-acid polypeptide reads, in one-letter code: Elongation factor Tu (394 aa).

Positions 10–204 (KPHVNVGTIG…HLDNYIPEPE (195 aa)) constitute a tr-type G domain. Residues 19 to 26 (GHVDHGKT) are G1. Residue 19–26 (GHVDHGKT) participates in GTP binding. Thr26 contacts Mg(2+). Positions 60–64 (GITIN) are G2. Residues 81-84 (DCPG) are G3. Residues 81–85 (DCPGH) and 136–139 (NKCD) each bind GTP. The interval 136–139 (NKCD) is G4. The interval 174-176 (SAL) is G5.

It belongs to the TRAFAC class translation factor GTPase superfamily. Classic translation factor GTPase family. EF-Tu/EF-1A subfamily. As to quaternary structure, monomer.

The protein localises to the cytoplasm. It carries out the reaction GTP + H2O = GDP + phosphate + H(+). Its function is as follows. GTP hydrolase that promotes the GTP-dependent binding of aminoacyl-tRNA to the A-site of ribosomes during protein biosynthesis. This is Elongation factor Tu from Histophilus somni (strain 129Pt) (Haemophilus somnus).